The chain runs to 187 residues: Large ribosomal subunit protein bL17 (187 aa).

Residues 122–187 (PKVRSSRTST…EADAAEKSDK (66 aa)) are disordered. Positions 127 to 144 (SRTSTATAPVAAAPVAEA) are enriched in low complexity. The segment covering 145-157 (PAEESDVPVEETD) has biased composition (acidic residues). Low complexity predominate over residues 167–176 (AETTDAAAAE).

The protein belongs to the bacterial ribosomal protein bL17 family. As to quaternary structure, part of the 50S ribosomal subunit. Contacts protein L32.

The chain is Large ribosomal subunit protein bL17 from Clavibacter sepedonicus (Clavibacter michiganensis subsp. sepedonicus).